Consider the following 145-residue polypeptide: Large ribosomal subunit protein uL15 (145 aa).

Over residues 1–30 the composition is skewed to basic residues; the sequence is MAHSLRKTRKLRGHVSHGHGRIGKHRKHPG. The segment at 1 to 48 is disordered; it reads MAHSLRKTRKLRGHVSHGHGRIGKHRKHPGGRGNAGGQHHHRINRDKY.

It belongs to the universal ribosomal protein uL15 family. In terms of assembly, component of the large ribosomal subunit.

Its subcellular location is the cytoplasm. It is found in the cytosol. The protein localises to the rough endoplasmic reticulum. Its function is as follows. Component of the large ribosomal subunit. This chain is Large ribosomal subunit protein uL15 (rpl-27a), found in Oscheius tipulae.